The following is an 89-amino-acid chain: Ribonuclease P protein component 1 (89 aa).

It belongs to the eukaryotic/archaeal RNase P protein component 1 family. In terms of assembly, consists of a catalytic RNA component and at least 4-5 protein subunits.

The protein localises to the cytoplasm. It catalyses the reaction Endonucleolytic cleavage of RNA, removing 5'-extranucleotides from tRNA precursor.. Its function is as follows. Part of ribonuclease P, a protein complex that generates mature tRNA molecules by cleaving their 5'-ends. The chain is Ribonuclease P protein component 1 from Thermoplasma volcanium (strain ATCC 51530 / DSM 4299 / JCM 9571 / NBRC 15438 / GSS1).